The sequence spans 1392 residues: ABC transporter G family member 42 (1392 aa).

Residues 1–18 show a composition bias toward polar residues; sequence MTMSQTDGVEFASRNTNE. A disordered region spans residues 1-26; it reads MTMSQTDGVEFASRNTNENGHDDDDQ. The ABC transporter 1 domain maps to 139–413; it reads SKLSRFMCSN…FEDCGFKCPN (275 aa). 173-180 contributes to the ATP binding site; sequence GPPSCGKT. The ABC transmembrane type-2 1 domain maps to 491–703; sequence DMLKACSRRE…AEIGLTANEF (213 aa). The next 6 helical transmembrane spans lie at 509–529, 543–563, 596–616, 627–647, 652–672, and 739–759; these read FVYV…MTVY, YLMG…LPEL, IPIS…VIGY, FLIL…IAAV, VVAT…GGFI, and FGAL…ALTF. Residues 800–1045 form the ABC transporter 2 domain; sequence FTFQDVQYII…VIEYFMRIHG (246 aa). Position 837–844 (837–844) interacts with ATP; that stretch reads GVSGAGKT. Residues 1117 to 1331 form the ABC transmembrane type-2 2 domain; that stretch reads EQFKACLWKQ…VLNGLLTSQY (215 aa). The next 7 helical transmembrane spans lie at 1136 to 1156, 1175 to 1195, 1215 to 1237, 1255 to 1275, 1281 to 1301, 1309 to 1329, and 1364 to 1384; these read YNLT…ILFW, MFTV…FSVA, YSLA…YVII, FYSI…LVVV, IAFT…GYVM, WWIW…LLTS, and LVAV…AFFI.

Belongs to the ABC transporter superfamily. ABCG family. PDR (TC 3.A.1.205) subfamily. In terms of tissue distribution, confined to shoots.

It localises to the membrane. In terms of biological role, may be a general defense protein. This is ABC transporter G family member 42 (ABCG42) from Arabidopsis thaliana (Mouse-ear cress).